Reading from the N-terminus, the 117-residue chain is Minor capsid protein VP2 (117 aa).

This sequence belongs to the lagovirus VP2 protein family. In terms of assembly, homooligomer. The portal-like structure consists in 12 copies of VP2. Interacts with capsid protein VP1.

It localises to the virion. It is found in the host cytoplasm. Minor structural protein that forms a portal-like structure at a unique three-fold axis of symmetry, following binding to the host receptor. The channel formed by VP2 may allow the delivery of the viral genome through the host endosomal membrane. The protein is Minor capsid protein VP2 of Rabbit hemorrhagic disease virus (strain AST89) (Ra/LV/RHDV/AST89/1989/SP).